The sequence spans 306 residues: Pseudouridine-5'-phosphate glycosidase (306 aa).

Glu27 functions as the Proton donor in the catalytic mechanism. Positions 88 and 108 each coordinate substrate. Asp140 is a Mn(2+) binding site. Position 142–144 (Ser142–Asp144) interacts with substrate. Lys161 functions as the Nucleophile in the catalytic mechanism.

Belongs to the pseudouridine-5'-phosphate glycosidase family. Homotrimer. It depends on Mn(2+) as a cofactor.

The catalysed reaction is D-ribose 5-phosphate + uracil = psi-UMP + H2O. Functionally, catalyzes the reversible cleavage of pseudouridine 5'-phosphate (PsiMP) to ribose 5-phosphate and uracil. Functions biologically in the cleavage direction, as part of a pseudouridine degradation pathway. The sequence is that of Pseudouridine-5'-phosphate glycosidase from Petrotoga mobilis (strain DSM 10674 / SJ95).